The sequence spans 294 residues: Non-selective voltage-gated ion channel VDAC2 (294 aa).

An N-acetylalanine modification is found at alanine 2. 2 residues coordinate ATP: lysine 23 and lysine 31. Residue lysine 31 is modified to N6-acetyllysine; alternate. Residue lysine 31 is modified to N6-succinyllysine; alternate. A Glycyl lysine isopeptide (Lys-Gly) (interchain with G-Cter in ubiquitin); alternate cross-link involves residue lysine 31. Beta stranded transmembrane passes span 37 to 46 and 50 to 58; these read LVKLDVKTKS and VEFSTSGSS. A Glycyl lysine isopeptide (Lys-Gly) (interchain with G-Cter in ubiquitin) cross-link involves residue lysine 64. A beta stranded membrane pass occupies residues 65 to 75; it reads VTGTLETKYKW. Tyrosine 78 carries the post-translational modification Phosphotyrosine. Transmembrane regions (beta stranded) follow at residues 80–87, 91–100, and 106–115; these read LTFTEKWN, TLGTEIAIED, and LKLTFDTTFS. Threonine 118 is subject to Phosphothreonine. N6-acetyllysine; alternate is present on lysine 120. Residue lysine 120 forms a Glycyl lysine isopeptide (Lys-Gly) (interchain with G-Cter in ubiquitin); alternate linkage. A Glycyl lysine isopeptide (Lys-Gly) (interchain with G-Cter in ubiquitin) cross-link involves residue lysine 121. 4 beta stranded membrane-spanning segments follow: residues 122–131, 134–141, 148–156, and 161–169; these read SGKIKSSYKR, INLGCDVD, AIHGSAVFG, and LAGYQMTFD. Residue lysine 172 forms a Glycyl lysine isopeptide (Lys-Gly) (interchain with G-Cter in ubiquitin) linkage. Beta stranded transmembrane passes span 174-186, 189-196, 200-209, 213-222, 229-238, and 242-249; these read KLTR…GYRT, FQLHTNVN, EFGGSIYQKV, LDTSVNLAWT, RFGIAAKYQL, and ASISAKVN. Serine 251 bears the Phosphoserine mark. NAD(+) is bound by residues 253–255 and 271–275; these read LIG and SALVD. Transmembrane regions (beta stranded) follow at residues 253–262 and 265–274; these read LIGVGYTQTL and GVKLTLSALV. The residue at position 277 (lysine 277) is an N6-acetyllysine; alternate. Lysine 277 is covalently cross-linked (Glycyl lysine isopeptide (Lys-Gly) (interchain with G-Cter in ubiquitin); alternate). The chain crosses the membrane as a beta stranded span at residues 284–293; sequence HKLGLALELE.

It belongs to the eukaryotic mitochondrial porin family. As to quaternary structure, monomer, homodimer and higher order oligomers; formation of higher order structures is necessary for scramblase activity. Interacts with ARMC12 in a TBC1D21-dependent manner. Interacts with KLC3. Interacts with SPATA33. Interacts with PPP3CC in a SPATA33-dependent manner. In terms of processing, ubiquitinated by PRKN during mitophagy, leading to its degradation and enhancement of mitophagy. Deubiquitinated by USP30.

It is found in the mitochondrion outer membrane. The protein localises to the membrane. The catalysed reaction is chloride(in) = chloride(out). It catalyses the reaction K(+)(in) = K(+)(out). It carries out the reaction a 1,2-diacyl-sn-glycero-3-phospho-L-serine(in) = a 1,2-diacyl-sn-glycero-3-phospho-L-serine(out). The enzyme catalyses a 1,2-diacyl-sn-glycero-3-phosphocholine(in) = a 1,2-diacyl-sn-glycero-3-phosphocholine(out). The catalysed reaction is a 1,2-diacyl-sn-glycero-3-phospho-(1D-myo-inositol)(in) = a 1,2-diacyl-sn-glycero-3-phospho-(1D-myo-inositol)(out). Non-selective voltage-gated ion channel that mediates the transport of anions and cations through the mitochondrion outer membrane and plasma membrane. The channel adopts an open conformation at zero mV and a closed conformation at both positive and negative potentials. There are two populations of channels; the main that functions in a lower open-state conductance with lower ion selectivity, that switch, in a voltage-dependent manner, from the open to a low-conducting 'closed' state and the other that has a normal ion selectivity in the typical high conductance, 'open' state. Binds various lipids, including the sphingolipid ceramide, the phospholipid phosphatidylcholine, and the sterols cholesterol and oxysterol. Binding of ceramide promotes the mitochondrial outer membrane permeabilization (MOMP) apoptotic pathway. Its function is as follows. Catalyzes the scrambling of phospholipids across the outer mitochondrial membrane; the mechanism is unrelated to channel activity and is capable of translocating both anionic and zwitterionic phospholipids. The protein is Non-selective voltage-gated ion channel VDAC2 of Oryctolagus cuniculus (Rabbit).